A 152-amino-acid chain; its full sequence is Lipoprotein signal peptidase (152 aa).

The next 3 membrane-spanning stretches (helical) occupy residues 5-25 (LFVL…FWIV), 61-81 (WFFV…LATH), and 84-104 (LNIW…GNFI). Residues Asp-114 and Asp-130 contribute to the active site. A helical membrane pass occupies residues 125-145 (IFNVADSYLTVGVILLVICLW).

The protein belongs to the peptidase A8 family.

The protein resides in the cell membrane. The enzyme catalyses Release of signal peptides from bacterial membrane prolipoproteins. Hydrolyzes -Xaa-Yaa-Zaa-|-(S,diacylglyceryl)Cys-, in which Xaa is hydrophobic (preferably Leu), and Yaa (Ala or Ser) and Zaa (Gly or Ala) have small, neutral side chains.. Its pathway is protein modification; lipoprotein biosynthesis (signal peptide cleavage). Its function is as follows. This protein specifically catalyzes the removal of signal peptides from prolipoproteins. The chain is Lipoprotein signal peptidase from Streptococcus pyogenes serotype M18 (strain MGAS8232).